A 917-amino-acid chain; its full sequence is MIASHMIACLFTELNQNQVQKVDQFLYHMRLSDETLLEISRRFRKEMEKGLGATTHPTAAVKMLPTFVRSTPDGTEHGEFLALDLGGTNFRVLRVRVTDNGLQRVEMENQIYAIPEDIMRGSGTQLFDHIAECLANFMDKLQIKEKKLPLGFTFSFPCHQTKLDESFLVSWTKGFKSSGVEGRDVVDLIRKAIQRRGDFDIDIVAVVNDTVGTMMTCGYDDQNCEIGLIVGTGSNACYMEEMRHIDMVEGDEGRMCINMEWGAFGDDGTLNDIRTEFDREIDMGSLNPGKQLFEKMISGMYMGELVRLILVKMAKAELLFQGKLSPELLTTGSFETKDVSDIEEDKDGIEKAYQILMRLGLNPLQEDCVATHRICQIVSTRSASLCAATLAAVLWRIKENKGEERLRSTIGVDGSVYKKHPHFAKRLHKAVRRLVPDCDVRFLRSEDGSGKGAAMVTAVAYRLADQHRARQKTLESLKLSHEQLLEVKRRMKVEMEQGLSKETHAVAPVKMLPTYVCATPDGTEKGDFLALDLGGTNFRVLLVRVRNGKRRGVEMHNKIYSIPQEVMHGTGEELFDHIVQCIADFLEYMGMKGVSLPLGFTFSFPCQQNSLDQSILLKWTKGFKASGCEGEDVVTLLKEAIHRREEFDLDVVAVVNDTVGTMMTCGYEDPHCEVGLIVGTGSNACYMEEMRNVELVDGEEGRMCVNMEWGAFGDNGCLDDLRTVFDVAVDELSLNPGKQRFEKMISGMYLGEIVRNILIDFTKRGLLFRGRISERLKTRGIFETKFLSQIESDCLALLQVRAILRHLGLESTCDDSIIVKEVCTVVARRAAQLCGAGMAAVVDKIRENRGLDNLKVTVGVDGTLYKLHPHFAKVMHETVRDLAPKCDVSFLESEDGSGKGAALITAVACRIREAGQR.

Met-1 is modified (N-acetylmethionine). Positions 1-16 (MIASHMIACLFTELNQ) are mitochondrial-binding peptide (MBP). Hexokinase domains lie at 16 to 458 (QNQV…MVTA) and 464 to 906 (ADQH…LITA). ATP is bound by residues Arg-30 and 84–89 (DLGGTN). The interval 73–207 (DGTEHGEFLA…DFDIDIVAVV (135 aa)) is hexokinase small subdomain 1. Residue 84–88 (DLGGT) coordinates D-glucose 6-phosphate. D-glucose is bound by residues 155–156 (SF), 172–173 (TK), and 208–209 (ND). The hexokinase large subdomain 1 stretch occupies residues 208–447 (NDTVGTMMTC…CDVRFLRSED (240 aa)). Residues Asp-209 and Thr-232 each contribute to the D-glucose 6-phosphate site. Residues Asn-235, Glu-260, and 291 to 294 (QLFE) contribute to the D-glucose site. 413–415 (DGS) is a binding site for D-glucose 6-phosphate. 425-426 (KR) lines the ATP pocket. D-glucose 6-phosphate contacts are provided by residues Ser-449 and 532-536 (DLGGT). The hexokinase small subdomain 2 stretch occupies residues 521–655 (DGTEKGDFLA…EFDLDVVAVV (135 aa)). 532–537 (DLGGTN) serves as a coordination point for ATP. Residues 603–604 (SF), 620–621 (TK), and 656–657 (ND) each bind D-glucose. Positions 656–895 (NDTVGTMMTC…CDVSFLESED (240 aa)) are hexokinase large subdomain 2. Residues Asp-657 and Thr-680 each contribute to the D-glucose 6-phosphate site. Thr-680 lines the ATP pocket. D-glucose is bound by residues 682-683 (SN), Glu-708, and 739-742 (QRFE). ATP is bound by residues 747–748 (GM), 784–788 (TKFLS), and 863–867 (TLYKL). D-glucose 6-phosphate is bound by residues 861 to 863 (DGT) and Ser-897.

This sequence belongs to the hexokinase family. As to quaternary structure, monomer. Interacts with TIGAR; the interaction increases hexokinase activity in a hypoxia- and HIF1A-dependent manner.

It is found in the mitochondrion outer membrane. The protein localises to the cytoplasm. The protein resides in the cytosol. The catalysed reaction is a D-hexose + ATP = a D-hexose 6-phosphate + ADP + H(+). The enzyme catalyses D-fructose + ATP = D-fructose 6-phosphate + ADP + H(+). It catalyses the reaction D-glucose + ATP = D-glucose 6-phosphate + ADP + H(+). Its pathway is carbohydrate metabolism; hexose metabolism. It participates in carbohydrate degradation; glycolysis; D-glyceraldehyde 3-phosphate and glycerone phosphate from D-glucose: step 1/4. Hexokinase activity is specifically inhibited by 2,6-disubstituted glucosamines. Its function is as follows. Catalyzes the phosphorylation of hexose, such as D-glucose and D-fructose, to hexose 6-phosphate (D-glucose 6-phosphate and D-fructose 6-phosphate, respectively). Mediates the initial step of glycolysis by catalyzing phosphorylation of D-glucose to D-glucose 6-phosphate. Plays a key role in maintaining the integrity of the outer mitochondrial membrane by preventing the release of apoptogenic molecules from the intermembrane space and subsequent apoptosis. In Rattus norvegicus (Rat), this protein is Hexokinase-2.